Consider the following 587-residue polypeptide: MAYDATKMADWQISEEAEKNMPMPEEWCEKLGLEKEEMLAMGRLSKLDFLKIIKRLEAKPDGKYIEVTAITPTPLGEGKSTTSLGLMEGLGARGKSVGGALRQPSGGPTMNVKGTAAGGGNSLLIPMTEFSLGLTGDINDIMNAHNLGMVAMTARMQHERNYNDEQLQRLTGMRRLDIDPTRVEMGWIIDFCAQALRNIVIGLGGRTDGYTMQSKFGIAVGSELMAILAVATDLADLKERINNITVAFDKSGKPVTCRDLEVGNAMAAFMRNTINPTLMSTAEYQPCLVHAGPFANIAVGQSSIIADRVGLKLWDYHVTESGFAADIGFEKFWNVKCRFSGLKPHVSVLTATIRALKMHGGGPKVVAGKALDDAYTKENLALVEKGVENMVHMIGVIRKSGINPVVCVNRFYTDTDAEVAIVKKAAEAAGARCAESKHWEKGGEGALEFADAVIDACEEGNDFDFLYPLEMKLRDRVDKIAREVYGADGVDWSPEATAKAEMLENDPKYADFATMMVKTHLSLTHDPVKKGVPKGWRLPIRDVLIYSGAKFLCPCAGTISLMPGTGSNPAFRRIDVDPATGKVSGLF.

ATP is bound at residue threonine 73–serine 80.

It belongs to the formate--tetrahydrofolate ligase family.

The enzyme catalyses (6S)-5,6,7,8-tetrahydrofolate + formate + ATP = (6R)-10-formyltetrahydrofolate + ADP + phosphate. Its pathway is one-carbon metabolism; tetrahydrofolate interconversion. The chain is Formate--tetrahydrofolate ligase from Desulfosudis oleivorans (strain DSM 6200 / JCM 39069 / Hxd3) (Desulfococcus oleovorans).